A 509-amino-acid polypeptide reads, in one-letter code: Activin receptor type-1 (509 aa).

Positions 1–20 are cleaved as a signal peptide; that stretch reads MVDGVMILPVLVMIAFPFPS. Residues 21 to 123 lie on the Extracellular side of the membrane; it reads MEDEKPKVNP…FPGTQNFHLE (103 aa). A glycan (N-linked (GlcNAc...) asparagine) is linked at N102. A helical membrane pass occupies residues 124–146; it reads VGLIILSVVFAVCLLACLLGVAL. At 147 to 509 the chain is on the cytoplasmic side; that stretch reads RKFKRRNQER…NSLDKLKTDC (363 aa). The GS domain occupies 178–207; sequence STLADLLDHSCTSGSGSGLPFLVQRTVARQ. Positions 208–502 constitute a Protein kinase domain; it reads ITLLECVGKG…KTLTKIDNSL (295 aa). ATP is bound by residues 214 to 222 and K235; that span reads VGKGRYGEV. The active-site Proton acceptor is the D336. S501 is subject to Phosphoserine.

This sequence belongs to the protein kinase superfamily. TKL Ser/Thr protein kinase family. TGFB receptor subfamily. As to quaternary structure, interacts with FKBP1A. Interacts with FCHO1. Interacts with CLU. Interacts with type II receptors AMHR2 and ACVR2A. Interacts with BMP7. Interacts with BMP9. Interacts with BMP6 (when glycosylated); the interaction may induce HAMP expression. Interacts with TSC22D1/TSC-22. Mg(2+) serves as cofactor. Requires Mn(2+) as cofactor.

The protein localises to the membrane. It catalyses the reaction L-threonyl-[receptor-protein] + ATP = O-phospho-L-threonyl-[receptor-protein] + ADP + H(+). It carries out the reaction L-seryl-[receptor-protein] + ATP = O-phospho-L-seryl-[receptor-protein] + ADP + H(+). Functionally, bone morphogenetic protein (BMP) type I receptor that is involved in a wide variety of biological processes, including bone, heart, cartilage, nervous, and reproductive system development and regulation. As a type I receptor, forms heterotetrameric receptor complexes with the type II receptors AMHR2, ACVR2A ors ACVR2B. Upon binding of ligands such as BMP7 or BMP9 to the heteromeric complexes, type II receptors transphosphorylate ACVR1 intracellular domain. In turn, ACVR1 kinase domain is activated and subsequently phosphorylates SMAD1/5/8 proteins that transduce the signal. In addition to its role in mediating BMP pathway-specific signaling, suppresses TGFbeta/activin pathway signaling by interfering with the binding of activin to its type II receptor. Besides canonical SMAD signaling, can activate non-canonical signaling pathways. May promote the expression of HAMP, potentially via its interaction with BMP6. The protein is Activin receptor type-1 (ACVR1) of Bos taurus (Bovine).